The sequence spans 249 residues: 5'-nucleotidase SurE (249 aa).

A divalent metal cation contacts are provided by aspartate 8, aspartate 9, serine 39, and asparagine 91.

This sequence belongs to the SurE nucleotidase family. A divalent metal cation serves as cofactor.

It localises to the cytoplasm. The catalysed reaction is a ribonucleoside 5'-phosphate + H2O = a ribonucleoside + phosphate. Its function is as follows. Nucleotidase that shows phosphatase activity on nucleoside 5'-monophosphates. The polypeptide is 5'-nucleotidase SurE (Pseudomonas syringae pv. syringae (strain B728a)).